The sequence spans 892 residues: Alanine--tRNA ligase (892 aa).

4 residues coordinate Zn(2+): His-594, His-598, Cys-702, and His-706.

It belongs to the class-II aminoacyl-tRNA synthetase family. It depends on Zn(2+) as a cofactor.

It is found in the cytoplasm. It catalyses the reaction tRNA(Ala) + L-alanine + ATP = L-alanyl-tRNA(Ala) + AMP + diphosphate. Its function is as follows. Catalyzes the attachment of alanine to tRNA(Ala) in a two-step reaction: alanine is first activated by ATP to form Ala-AMP and then transferred to the acceptor end of tRNA(Ala). Also edits incorrectly charged Ser-tRNA(Ala) and Gly-tRNA(Ala) via its editing domain. This chain is Alanine--tRNA ligase, found in Pyrobaculum arsenaticum (strain DSM 13514 / JCM 11321 / PZ6).